We begin with the raw amino-acid sequence, 135 residues long: Agouti-signaling protein (135 aa).

A signal peptide spans 1 to 22; it reads MNILRLLLATLLVCLCLLTAYS. N-linked (GlcNAc...) asparagine glycosylation is present at N39. Residues 56–101 are disordered; it reads NKKSKKISRKEAEKKRSSKKKASMKNVAQPRRPRPPPPAPCVATRD. Cystine bridges form between C96-C111, C103-C117, C110-C128, C114-C135, and C119-C126. The region spanning 96-135 is the Agouti domain; the sequence is CVATRDSCKPPAPACCDPCASCQCRFFRSSCSCRVLNPTC.

The protein localises to the secreted. Its function is as follows. Involved in the regulation of melanogenesis. The binding of ASP to MC1R precludes alpha-MSH initiated signaling and thus blocks production of cAMP, leading to a down-regulation of eumelanogenesis (brown/black pigment) and thus increasing synthesis of pheomelanin (yellow/red pigment). The polypeptide is Agouti-signaling protein (ASIP) (Felis catus (Cat)).